Here is a 280-residue protein sequence, read N- to C-terminus: Mevalonyl-coenzyme A hydratase SIDH (280 aa).

Residues 278 to 280 (SKL) carry the PTS1-type peroxisomal targeting signal motif.

The protein belongs to the enoyl-CoA hydratase/isomerase family.

The protein localises to the peroxisome. It participates in siderophore biosynthesis. Functionally, mevalonyl-coenzyme A hydratase; part of the gene cluster that mediates the biosynthesis of at least 11 siderophores, including beauverichelin A, dimerumic acid (DA), Na-dimethyl coprogen (NADC), eleutherazine B, ferricrocin (FC), fusarinine A, fusarinine C (FsC), metachelin A, mevalonolactone, rhodotorulic acid (RA) and tenellin. This cocktail of siderophores for iron metabolism is essential for virulence, and more specifically for the fungal virulence in penetrating through the host cuticle. Siderophore synthesis is also involved in conidial germination under iron-deficient conditions. For biosynthesis of fusarinine C, the transacylase SIDF transfers anhydromevalonyl to N(5)-hydroxyornithine. The required anhydromevalonyl-CoA moiety is derived from mevalonate by CoA ligation and dehydration catalyzed by SIDI and sidH respectively. SIDH is not essential for siderophore production, probably due to functional redundancy of this protein family, as there are 15 homologs of SIDH in B.bassiana. The sequence is that of Mevalonyl-coenzyme A hydratase SIDH from Beauveria bassiana (strain ARSEF 2860) (White muscardine disease fungus).